We begin with the raw amino-acid sequence, 432 residues long: 3-phosphoshikimate 1-carboxyvinyltransferase (432 aa).

Residues Lys-23, Ser-24, and Arg-28 each contribute to the 3-phosphoshikimate site. Lys-23 contributes to the phosphoenolpyruvate binding site. Phosphoenolpyruvate is bound by residues Gly-95 and Arg-123. Residues Ser-167, Gln-169, Asp-317, and Lys-344 each contribute to the 3-phosphoshikimate site. Gln-169 contacts phosphoenolpyruvate. Residue Asp-317 is the Proton acceptor of the active site. Residues Arg-348 and Arg-390 each contribute to the phosphoenolpyruvate site.

This sequence belongs to the EPSP synthase family. In terms of assembly, monomer.

The protein localises to the cytoplasm. It catalyses the reaction 3-phosphoshikimate + phosphoenolpyruvate = 5-O-(1-carboxyvinyl)-3-phosphoshikimate + phosphate. Its pathway is metabolic intermediate biosynthesis; chorismate biosynthesis; chorismate from D-erythrose 4-phosphate and phosphoenolpyruvate: step 6/7. In terms of biological role, catalyzes the transfer of the enolpyruvyl moiety of phosphoenolpyruvate (PEP) to the 5-hydroxyl of shikimate-3-phosphate (S3P) to produce enolpyruvyl shikimate-3-phosphate and inorganic phosphate. The sequence is that of 3-phosphoshikimate 1-carboxyvinyltransferase from Staphylococcus carnosus (strain TM300).